The primary structure comprises 156 residues: TPAGRLKCELFSDIVPRTSENFRQLCTGEFRPNHVPEGYKNSIFHRIIKDFMCQGGDFINADGTGSRSIYGDKFDDENFTLKHDKAGLLSMANSGPGTNGCQFFITAQPCPFLDGKHVVFGKVVDGLLTLRKMENVPTGANNRPKMAVRITQCGEM.

The region spanning 1 to 155 (TPAGRLKCEL…MAVRITQCGE (155 aa)) is the PPIase cyclophilin-type domain.

The protein belongs to the cyclophilin-type PPIase family. PPIase H subfamily.

The protein localises to the nucleus. It catalyses the reaction [protein]-peptidylproline (omega=180) = [protein]-peptidylproline (omega=0). In terms of biological role, PPIases accelerate the folding of proteins. It catalyzes the cis-trans isomerization of proline imidic peptide bonds in oligopeptides. This is Peptidyl-prolyl cis-trans isomerase H (CYP3) from Mycosarcoma maydis (Corn smut fungus).